A 168-amino-acid chain; its full sequence is Lipoprotein signal peptidase (168 aa).

4 consecutive transmembrane segments (helical) span residues 15–35 (WLWL…VVMD), 47–67 (VLPF…SFLS), 75–95 (WLFT…MSKL), and 107–127 (ALII…GFVV). Catalysis depends on residues Asp-128 and Asp-146. A helical membrane pass occupies residues 141–161 (AFNLADTTICIGAAMIILDGF).

The protein belongs to the peptidase A8 family.

It is found in the cell inner membrane. The enzyme catalyses Release of signal peptides from bacterial membrane prolipoproteins. Hydrolyzes -Xaa-Yaa-Zaa-|-(S,diacylglyceryl)Cys-, in which Xaa is hydrophobic (preferably Leu), and Yaa (Ala or Ser) and Zaa (Gly or Ala) have small, neutral side chains.. It functions in the pathway protein modification; lipoprotein biosynthesis (signal peptide cleavage). Functionally, this protein specifically catalyzes the removal of signal peptides from prolipoproteins. The protein is Lipoprotein signal peptidase of Vibrio campbellii (strain ATCC BAA-1116).